The following is a 109-amino-acid chain: Nucleoid-associated protein Sputw3181_1707 (109 aa).

Belongs to the YbaB/EbfC family. Homodimer.

It localises to the cytoplasm. The protein resides in the nucleoid. Its function is as follows. Binds to DNA and alters its conformation. May be involved in regulation of gene expression, nucleoid organization and DNA protection. This Shewanella sp. (strain W3-18-1) protein is Nucleoid-associated protein Sputw3181_1707.